Consider the following 262-residue polypeptide: 4-hydroxy-2-oxo-heptane-1,7-dioate aldolase (262 aa).

His45 acts as the Proton acceptor in catalysis. Residue Gln147 participates in substrate binding. Residue Glu149 coordinates a divalent metal cation. Substrate-binding residues include Ala174 and Asp175. Asp175 lines the a divalent metal cation pocket.

Belongs to the HpcH/HpaI aldolase family. As to quaternary structure, homohexamer; trimer of dimers. A divalent metal cation serves as cofactor.

It carries out the reaction 4-hydroxy-2-oxoheptanedioate = succinate semialdehyde + pyruvate. Its pathway is aromatic compound metabolism; 4-hydroxyphenylacetate degradation; pyruvate and succinate semialdehyde from 4-hydroxyphenylacetate: step 7/7. Its function is as follows. Catalyzes the reversible retro-aldol cleavage of 4-hydroxy-2-ketoheptane-1,7-dioate (HKHD) to pyruvate and succinic semialdehyde. The protein is 4-hydroxy-2-oxo-heptane-1,7-dioate aldolase of Shigella boydii serotype 18 (strain CDC 3083-94 / BS512).